Consider the following 1214-residue polypeptide: Formin-D (1214 aa).

Residues 10-379 form the GBD/FH3 domain; the sequence is KKEESPQSID…KMNNGESYLD (370 aa). Residues 401–448 adopt a coiled-coil conformation; sequence SGEKAVLIQKEIEDLKKQKKRDQDKLAEKDKLLTKLAKRMRKMEEAIK. Positions 457 to 544 constitute an FH1 domain; the sequence is NNQIEIESPP…GSGDGIPLPP (88 aa). Composition is skewed to polar residues over residues 462 to 479 and 518 to 534; these read IESP…TTPG and LDTT…QTEA. Disordered stretches follow at residues 462–490, 507–569, 868–948, 1026–1045, 1054–1089, and 1133–1214; these read IESP…TSPV, APNG…SRPP, PKSV…PLKD, DKST…IKKS, LKKI…DDED, and MNLQ…EGEN. The span at 541 to 554 shows a compositional bias: pro residues; sequence PLPPGAPPPPPPPG. Positions 562 to 1037 constitute an FH2 domain; that stretch reads PQLCSRPPSI…STQRKNEKER (476 aa). Positions 868 to 877 are enriched in basic and acidic residues; sequence PKSVEPKPDD. Polar residues predominate over residues 930–940; sequence QVNTNSTSDSK. Residues 1019 to 1056 adopt a coiled-coil conformation; it reads EIEKSIKDKSTQRKNEKERKEMEIKKSKLEMIHSKLKK. A compositionally biased stretch (polar residues) spans 1059-1071; that stretch reads SPSSSNRILASNE. A DAD domain is found at 1065 to 1095; it reads RILASNESSPTSSTSSVVHQHDDEDEETIKE. Positions 1161–1171 are enriched in low complexity; it reads SSTYSSISSIY. Acidic residues predominate over residues 1174-1214; sequence EPLDMSDQEDEDEEEEEDEEEEEEEEEGDDDNDNDEEEGEN. Residues 1176–1207 adopt a coiled-coil conformation; the sequence is LDMSDQEDEDEEEEEDEEEEEEEEEGDDDNDN.

Belongs to the formin homology family. Diaphanous subfamily. In terms of assembly, interacts (via GBD/FH3 domain) with activated Rho-GTPases.

Functionally, formins play an important role in the nucleation of actin and the formation of linear actin filaments. The polypeptide is Formin-D (forD) (Dictyostelium discoideum (Social amoeba)).